The primary structure comprises 978 residues: Glycine dehydrogenase (decarboxylating) (978 aa).

Lys-726 is subject to N6-(pyridoxal phosphate)lysine.

It belongs to the GcvP family. The glycine cleavage system is composed of four proteins: P, T, L and H. Requires pyridoxal 5'-phosphate as cofactor.

It carries out the reaction N(6)-[(R)-lipoyl]-L-lysyl-[glycine-cleavage complex H protein] + glycine + H(+) = N(6)-[(R)-S(8)-aminomethyldihydrolipoyl]-L-lysyl-[glycine-cleavage complex H protein] + CO2. Functionally, the glycine cleavage system catalyzes the degradation of glycine. The P protein binds the alpha-amino group of glycine through its pyridoxal phosphate cofactor; CO(2) is released and the remaining methylamine moiety is then transferred to the lipoamide cofactor of the H protein. The chain is Glycine dehydrogenase (decarboxylating) from Paraburkholderia xenovorans (strain LB400).